The primary structure comprises 180 residues: Small ribosomal subunit protein uS4 (180 aa).

An S4 RNA-binding domain is found at 103–165 (RRLQTLVYKK…KNSPFAKESH (63 aa)).

This sequence belongs to the universal ribosomal protein uS4 family. As to quaternary structure, part of the 30S ribosomal subunit. Contacts protein S5. The interaction surface between S4 and S5 is involved in control of translational fidelity.

One of the primary rRNA binding proteins, it binds directly to 16S rRNA where it nucleates assembly of the body of the 30S subunit. Its function is as follows. With S5 and S12 plays an important role in translational accuracy. In Thermococcus gammatolerans (strain DSM 15229 / JCM 11827 / EJ3), this protein is Small ribosomal subunit protein uS4.